We begin with the raw amino-acid sequence, 465 residues long: UDP-N-acetylmuramate--L-alanine ligase (465 aa).

115–121 (GAHGKTT) serves as a coordination point for ATP.

The protein belongs to the MurCDEF family.

The protein resides in the cytoplasm. The enzyme catalyses UDP-N-acetyl-alpha-D-muramate + L-alanine + ATP = UDP-N-acetyl-alpha-D-muramoyl-L-alanine + ADP + phosphate + H(+). Its pathway is cell wall biogenesis; peptidoglycan biosynthesis. Functionally, cell wall formation. This chain is UDP-N-acetylmuramate--L-alanine ligase, found in Coxiella burnetii (strain CbuG_Q212) (Coxiella burnetii (strain Q212)).